The chain runs to 293 residues: Indole-3-glycerol phosphate synthase (293 aa).

It belongs to the TrpC family.

The catalysed reaction is 1-(2-carboxyphenylamino)-1-deoxy-D-ribulose 5-phosphate + H(+) = (1S,2R)-1-C-(indol-3-yl)glycerol 3-phosphate + CO2 + H2O. Its pathway is amino-acid biosynthesis; L-tryptophan biosynthesis; L-tryptophan from chorismate: step 4/5. This Prochlorococcus marinus (strain SARG / CCMP1375 / SS120) protein is Indole-3-glycerol phosphate synthase.